A 341-amino-acid chain; its full sequence is Ubiquinone biosynthesis protein COQ4, mitochondrial (341 aa).

Residues 1–16 (MLSRISSVRIGTQVRQ) constitute a mitochondrion transit peptide. Zn(2+)-binding residues include histidine 220, aspartate 221, histidine 224, and glutamate 236.

Belongs to the COQ4 family. In terms of assembly, component of a multi-subunit COQ enzyme complex, composed of at least COQ3, COQ4, COQ5, COQ6, COQ7 and COQ9. It depends on Zn(2+) as a cofactor.

It is found in the mitochondrion inner membrane. It carries out the reaction a 4-hydroxy-3-methoxy-5-(all-trans-polyprenyl)benzoate + H(+) = a 2-methoxy-6-(all-trans-polyprenyl)phenol + CO2. The protein operates within cofactor biosynthesis; ubiquinone biosynthesis. Functionally, lyase that catalyzes the C1-decarboxylation of 4-hydroxy-3-methoxy-5-(all-trans-polyprenyl)benzoic acid into 2-methoxy-6-(all-trans-polyprenyl)phenol during ubiquinone biosynthesis. This is Ubiquinone biosynthesis protein COQ4, mitochondrial from Vanderwaltozyma polyspora (strain ATCC 22028 / DSM 70294 / BCRC 21397 / CBS 2163 / NBRC 10782 / NRRL Y-8283 / UCD 57-17) (Kluyveromyces polysporus).